We begin with the raw amino-acid sequence, 376 residues long: Carbapenem antibiotics biosynthesis protein CarD (376 aa).

It belongs to the proline oxidase family.

It participates in antibiotic biosynthesis; carbapenem biosynthesis. This is Carbapenem antibiotics biosynthesis protein CarD (carD) from Pectobacterium carotovorum subsp. carotovorum (Erwinia carotovora subsp. carotovora).